Here is a 620-residue protein sequence, read N- to C-terminus: Notoamide biosynthesis transcriptional activator notL' (620 aa).

The interval 1–26 is disordered; sequence MPPSSKSRRLPPAASDSAASDAQKRR. A DNA-binding region (zn(2)-C6 fungal-type) is located at residues 33-59; it reads CSACKARKLKCTGAPPCANCVKSRIEC. The interval 591–620 is disordered; it reads ETGAFFLDPDQPSGNSTPIKSETPEGTAIS.

It localises to the nucleus. Transcription factor that probably regulates the expression of the gene cluster that mediates the biosynthesis of notoamide, a fungal indole alkaloid that belongs to a family of natural products containing a characteristic bicyclo[2.2.2]diazaoctane core. The protein is Notoamide biosynthesis transcriptional activator notL' of Aspergillus versicolor.